A 92-amino-acid polypeptide reads, in one-letter code: Small ribosomal subunit protein uS19 (92 aa).

Belongs to the universal ribosomal protein uS19 family.

Functionally, protein S19 forms a complex with S13 that binds strongly to the 16S ribosomal RNA. This Ruegeria pomeroyi (strain ATCC 700808 / DSM 15171 / DSS-3) (Silicibacter pomeroyi) protein is Small ribosomal subunit protein uS19.